We begin with the raw amino-acid sequence, 624 residues long: DNA mismatch repair protein MutL (624 aa).

A compositionally biased stretch (basic and acidic residues) spans 340–355 (NKLDTDSHSQSHERGH). Positions 340 to 415 (NKLDTDSHSQ…RGGATSSYRQ (76 aa)) are disordered. Composition is skewed to polar residues over residues 372–383 (HQTAPSTKASTE) and 391–415 (SPIS…SYRQ).

This sequence belongs to the DNA mismatch repair MutL/HexB family.

Functionally, this protein is involved in the repair of mismatches in DNA. It is required for dam-dependent methyl-directed DNA mismatch repair. May act as a 'molecular matchmaker', a protein that promotes the formation of a stable complex between two or more DNA-binding proteins in an ATP-dependent manner without itself being part of a final effector complex. The sequence is that of DNA mismatch repair protein MutL from Shewanella sediminis (strain HAW-EB3).